Reading from the N-terminus, the 61-residue chain is Photosystem II reaction center protein K (61 aa).

Residues 1–24 constitute a propeptide that is removed on maturation; sequence MLNIFSLICICLNSALYSSSLFFA. Residues 40–60 form a helical membrane-spanning segment; sequence MPVIPLFFFLLAFVWQAAVSF.

This sequence belongs to the PsbK family. As to quaternary structure, PSII is composed of 1 copy each of membrane proteins PsbA, PsbB, PsbC, PsbD, PsbE, PsbF, PsbH, PsbI, PsbJ, PsbK, PsbL, PsbM, PsbT, PsbX, PsbY, PsbZ, Psb30/Ycf12, at least 3 peripheral proteins of the oxygen-evolving complex and a large number of cofactors. It forms dimeric complexes.

It localises to the plastid. Its subcellular location is the chloroplast thylakoid membrane. Its function is as follows. One of the components of the core complex of photosystem II (PSII). PSII is a light-driven water:plastoquinone oxidoreductase that uses light energy to abstract electrons from H(2)O, generating O(2) and a proton gradient subsequently used for ATP formation. It consists of a core antenna complex that captures photons, and an electron transfer chain that converts photonic excitation into a charge separation. This Panax ginseng (Korean ginseng) protein is Photosystem II reaction center protein K.